A 381-amino-acid chain; its full sequence is E3 ubiquitin-protein ligase KCMF1 (381 aa).

Residue serine 2 is modified to N-acetylserine. Serine 2 is subject to Phosphoserine. The segment at histidine 4–aspartate 60 adopts a ZZ-type zinc-finger fold. Residues cysteine 9, cysteine 12, cysteine 24, cysteine 27, cysteine 33, cysteine 36, histidine 46, and histidine 50 each contribute to the Zn(2+) site. Residues phenylalanine 78 to histidine 101 form a C2H2-type zinc finger. The interval methionine 154–arginine 193 is disordered. 3 positions are modified to phosphoserine: serine 169, serine 189, and serine 212. The span at serine 175–serine 191 shows a compositional bias: low complexity. The stretch at serine 225–arginine 257 forms a coiled coil. The interval threonine 294–alanine 314 is disordered. The segment covering asparagine 297 to alanine 314 has biased composition (basic and acidic residues). Phosphoserine occurs at positions 335 and 336.

This sequence belongs to the KCMF1 family. Component of the SIFI complex, composed of KCMF1, UBR4 and calmodulin (CALM1, CALM2 or CALM3). As to expression, spleen, small intestine, ovary, peripheral blood, lung, kidney and pancreas. Expressed at low levels in the thymus, prostate, testis, colon, heart, brain, placenta and liver.

It localises to the cytoplasm. The protein resides in the late endosome. It is found in the lysosome. It carries out the reaction S-ubiquitinyl-[E2 ubiquitin-conjugating enzyme]-L-cysteine + [acceptor protein]-L-lysine = [E2 ubiquitin-conjugating enzyme]-L-cysteine + N(6)-ubiquitinyl-[acceptor protein]-L-lysine.. It functions in the pathway protein modification; protein ubiquitination. Functionally, E3 ubiquitin-protein ligase which accepts ubiquitin from an E2 ubiquitin-conjugating enzyme and then transfers it to targeted substrates, promoting their degradation by the proteasome. Together with UBR4, component of the N-end rule pathway: ubiquitinates proteins bearing specific N-terminal residues that are destabilizing according to the N-end rule, leading to their degradation. Does not ubiquitinate proteins that are acetylated at the N-terminus. Together with UBR4, part of a protein quality control pathway that catalyzes ubiquitination and degradation of proteins that have been oxidized in response to reactive oxygen species (ROS): recognizes proteins with an Arg-CysO3(H) degron at the N-terminus, and mediates assembly of heterotypic 'Lys-63'-/'Lys-27'-linked branched ubiquitin chains on oxidized proteins, leading to their degradation by autophagy. Catalytic component of the SIFI complex, a multiprotein complex required to inhibit the mitochondrial stress response after a specific stress event has been resolved: ubiquitinates and degrades (1) components of the HRI-mediated signaling of the integrated stress response, such as DELE1 and EIF2AK1/HRI, as well as (2) unimported mitochondrial precursors. Within the SIFI complex, UBR4 initiates ubiquitin chain that are further elongated or branched by KCMF1. This is E3 ubiquitin-protein ligase KCMF1 from Homo sapiens (Human).